The sequence spans 442 residues: ATP-dependent protease ATPase subunit HslU (442 aa).

ATP is bound by residues Ile-18, 60 to 65 (GVGKTE), Asp-255, Glu-320, and Arg-392.

The protein belongs to the ClpX chaperone family. HslU subfamily. In terms of assembly, a double ring-shaped homohexamer of HslV is capped on each side by a ring-shaped HslU homohexamer. The assembly of the HslU/HslV complex is dependent on binding of ATP.

The protein localises to the cytoplasm. In terms of biological role, ATPase subunit of a proteasome-like degradation complex; this subunit has chaperone activity. The binding of ATP and its subsequent hydrolysis by HslU are essential for unfolding of protein substrates subsequently hydrolyzed by HslV. HslU recognizes the N-terminal part of its protein substrates and unfolds these before they are guided to HslV for hydrolysis. The sequence is that of ATP-dependent protease ATPase subunit HslU from Shewanella putrefaciens (strain CN-32 / ATCC BAA-453).